The chain runs to 184 residues: UPF0149 protein PP_5201 (184 aa).

This sequence belongs to the UPF0149 family.

The chain is UPF0149 protein PP_5201 from Pseudomonas putida (strain ATCC 47054 / DSM 6125 / CFBP 8728 / NCIMB 11950 / KT2440).